A 150-amino-acid chain; its full sequence is Endoribonuclease YbeY (150 aa).

His113, His117, and His123 together coordinate Zn(2+).

This sequence belongs to the endoribonuclease YbeY family. Zn(2+) is required as a cofactor.

It localises to the cytoplasm. In terms of biological role, single strand-specific metallo-endoribonuclease involved in late-stage 70S ribosome quality control and in maturation of the 3' terminus of the 16S rRNA. The polypeptide is Endoribonuclease YbeY (Malacoplasma penetrans (strain HF-2) (Mycoplasma penetrans)).